The following is a 161-amino-acid chain: Beta-lactoglobulin-1 (161 aa).

2 disulfide bridges follow: Cys66–Cys159 and Cys106–Cys119.

Belongs to the calycin superfamily. Lipocalin family. As to quaternary structure, monomer. In terms of tissue distribution, synthesized in mammary gland and secreted in milk.

It is found in the secreted. Functionally, primary component of whey, it binds retinol and is probably involved in the transport of that molecule. This Canis lupus familiaris (Dog) protein is Beta-lactoglobulin-1 (LGB1).